Consider the following 484-residue polypeptide: Nuclear rim protein 1 (484 aa).

Ser3 carries the post-translational modification Phosphoserine. The next 2 membrane-spanning stretches (helical) occupy residues 145 to 165 (FTIFILLSLNLYVSCKFMFGY) and 252 to 272 (TAIVFLSFSDVSFTSAIAIVF). The interval 416-457 (SSNENLEKGGAFLPNQDQNRPSKSLSPLRKTPLSARQKRFEG) is disordered. Ser417 is subject to Phosphoserine. Residues 430–440 (NQDQNRPSKSL) show a composition bias toward polar residues. Residue Ser474 is modified to Phosphoserine.

The protein belongs to the NUR1 family. In terms of assembly, interacts with CSM1.

Its subcellular location is the nucleus membrane. Functionally, member of a perinuclear network that controls recombination at multiple loci to maintain genome stability. Required for rDNA repeat stability. This Saccharomyces cerevisiae (strain Lalvin EC1118 / Prise de mousse) (Baker's yeast) protein is Nuclear rim protein 1 (NUR1).